Reading from the N-terminus, the 119-residue chain is Large ribosomal subunit protein bL20 (119 aa).

This sequence belongs to the bacterial ribosomal protein bL20 family.

Its function is as follows. Binds directly to 23S ribosomal RNA and is necessary for the in vitro assembly process of the 50S ribosomal subunit. It is not involved in the protein synthesizing functions of that subunit. The protein is Large ribosomal subunit protein bL20 of Bacillus velezensis (strain DSM 23117 / BGSC 10A6 / LMG 26770 / FZB42) (Bacillus amyloliquefaciens subsp. plantarum).